A 445-amino-acid polypeptide reads, in one-letter code: GRAM domain-containing protein 2B (445 aa).

At Met1 the chain carries N-acetylmethionine. Positions 1-118 (MVKKRLSSSD…ERKKSSSSSQ (118 aa)) are disordered. 2 stretches are compositionally biased toward polar residues: residues 18-44 (PSNS…SSEA) and 56-68 (KSPT…SSVE). Residues 82 to 93 (SKSSFDGSSLLS) show a composition bias toward low complexity. The span at 94–112 (DKNDCKTESKTDSKTERKK) shows a compositional bias: basic and acidic residues. Residues 123-190 (MHFHKLFLDV…FSVTLIKKTK (68 aa)) enclose the GRAM domain. The segment covering 233-246 (TSVGNSPNPSSAEN) has biased composition (polar residues). The disordered stretch occupies residues 233 to 252 (TSVGNSPNPSSAENSFRADR). 3 positions are modified to phosphoserine: Ser238, Ser255, and Ser265. The disordered stretch occupies residues 277-331 (DLEGYSSSGSQTPESENSRDFHVTESQTVLNVTKGETKPPRTDAHGSRAPDGKAK). A compositionally biased stretch (polar residues) spans 281–291 (YSSSGSQTPES). Positions 311–330 (GETKPPRTDAHGSRAPDGKA) are enriched in basic and acidic residues.

The sequence is that of GRAM domain-containing protein 2B (Gramd2b) from Mus musculus (Mouse).